Consider the following 505-residue polypeptide: Glutamate--tRNA ligase (505 aa).

The 'HIGH' region motif lies at 12–22; sequence PSPTGPLHIGG. Positions 260-264 match the 'KMSKS' region motif; it reads KLSKR. Lys263 lines the ATP pocket.

It belongs to the class-I aminoacyl-tRNA synthetase family. Glutamate--tRNA ligase type 1 subfamily. Monomer.

Its subcellular location is the cytoplasm. It carries out the reaction tRNA(Glu) + L-glutamate + ATP = L-glutamyl-tRNA(Glu) + AMP + diphosphate. Functionally, catalyzes the attachment of glutamate to tRNA(Glu) in a two-step reaction: glutamate is first activated by ATP to form Glu-AMP and then transferred to the acceptor end of tRNA(Glu). This chain is Glutamate--tRNA ligase, found in Porphyromonas gingivalis (strain ATCC BAA-308 / W83).